Here is a 382-residue protein sequence, read N- to C-terminus: MKYISILGASGSIGTQTLDVIRAHPDEFRLAAASVGKNIEAARRLIAEFSPSLVAVADRDAYKVLYREYRGRTTIVYGEEGLIEAAVCPQADVVVTAVVGSVGLVPTLKAIEAGKAIALANKETLVVAGHLVMAAAKRRGVPLLPVDSEHSAIFQCLQGERMEHVDKLILTASGGSFRDKTRRELAHVTVEEALCHPNWSMGAKITIDSATMMNKGFEVIEAHWLFGLPYERIEVVLHRESIIHSLVQFRDTSVLAQLGTPDMRVPIQYALAYPKRLPLPSAKPLDFISLGALHFAPVDFDRYRCLRLAYEAGKRGGSLPTVLNAANEEAVAAFLAGRIPFLAIEEWIERALERHRPVSNPQLEDIREIDADARAYVRSLLS.

Residues Ser-10, Gly-11, Ser-12, Ile-13, Gly-36, Lys-37, Asn-38, and Asn-121 each coordinate NADPH. 1-deoxy-D-xylulose 5-phosphate is bound at residue Lys-122. Glu-123 contributes to the NADPH binding site. Position 147 (Asp-147) interacts with Mn(2+). 1-deoxy-D-xylulose 5-phosphate is bound by residues Ser-148, Glu-149, Ser-173, and His-196. A Mn(2+)-binding site is contributed by Glu-149. Residue Gly-202 coordinates NADPH. Ser-209, Asn-214, Lys-215, and Glu-218 together coordinate 1-deoxy-D-xylulose 5-phosphate. Glu-218 serves as a coordination point for Mn(2+).

This sequence belongs to the DXR family. It depends on Mg(2+) as a cofactor. Requires Mn(2+) as cofactor.

It carries out the reaction 2-C-methyl-D-erythritol 4-phosphate + NADP(+) = 1-deoxy-D-xylulose 5-phosphate + NADPH + H(+). The protein operates within isoprenoid biosynthesis; isopentenyl diphosphate biosynthesis via DXP pathway; isopentenyl diphosphate from 1-deoxy-D-xylulose 5-phosphate: step 1/6. Its function is as follows. Catalyzes the NADPH-dependent rearrangement and reduction of 1-deoxy-D-xylulose-5-phosphate (DXP) to 2-C-methyl-D-erythritol 4-phosphate (MEP). In Geobacillus kaustophilus (strain HTA426), this protein is 1-deoxy-D-xylulose 5-phosphate reductoisomerase.